We begin with the raw amino-acid sequence, 172 residues long: uncharacterized protein (172 aa).

Disordered stretches follow at residues Met1–Ser54 and Ile82–Glu111. The span at Ala14–Arg29 shows a compositional bias: low complexity. A compositionally biased stretch (pro residues) spans Thr30 to Thr47. Positions Ser89–Val109 are enriched in polar residues.

This is an uncharacterized protein from Schizosaccharomyces pombe (strain 972 / ATCC 24843) (Fission yeast).